Consider the following 204-residue polypeptide: Guanylate kinase (204 aa).

The Guanylate kinase-like domain occupies 3 to 181 (GTLYIVSAAS…AVSEMSAIFT (179 aa)). Residue 10–17 (AASGTGKS) participates in ATP binding.

Belongs to the guanylate kinase family.

The protein resides in the cytoplasm. The catalysed reaction is GMP + ATP = GDP + ADP. Essential for recycling GMP and indirectly, cGMP. This chain is Guanylate kinase (gmk), found in Xylella fastidiosa (strain 9a5c).